Here is a 144-residue protein sequence, read N- to C-terminus: Glycine-rich protein DC9.1 (144 aa).

The helical transmembrane segment at 5 to 25 (IFLLLGLSIAFAILISSEVAA) threads the bilayer. 11 consecutive repeat copies span residues 37 to 42 (GYNNGG), 43 to 48 (GYHNGG), 50 to 55 (GYNNGG), 56 to 61 (GYHNGG), 63 to 68 (GYNNGG), 69 to 74 (GYHNGG), 76 to 81 (GYNNGG), 82 to 87 (GYHNGG), 89 to 94 (GYNNGG), 102 to 107 (GYNNGG), and 108 to 113 (GHHGGG). The 11 X 6 AA tandem repeats of G-Y-[NH]-N-G -G stretch occupies residues 37–113 (GYNNGGGYHN…NNGGGHHGGG (77 aa)).

This sequence belongs to the GRP family.

The protein resides in the membrane. This Daucus carota (Wild carrot) protein is Glycine-rich protein DC9.1.